A 156-amino-acid polypeptide reads, in one-letter code: Phosphopantetheine adenylyltransferase (156 aa).

Residue Thr10 participates in substrate binding. ATP-binding positions include Thr10–Phe11 and His18. Substrate-binding residues include Lys42, Leu74, and Arg88. ATP is bound by residues Gly89–Arg91, Glu99, and Asn124–Ser130.

The protein belongs to the bacterial CoaD family. Homohexamer. Mg(2+) is required as a cofactor.

It is found in the cytoplasm. The catalysed reaction is (R)-4'-phosphopantetheine + ATP + H(+) = 3'-dephospho-CoA + diphosphate. It participates in cofactor biosynthesis; coenzyme A biosynthesis; CoA from (R)-pantothenate: step 4/5. Reversibly transfers an adenylyl group from ATP to 4'-phosphopantetheine, yielding dephospho-CoA (dPCoA) and pyrophosphate. The protein is Phosphopantetheine adenylyltransferase of Campylobacter curvus (strain 525.92).